Here is an 85-residue protein sequence, read N- to C-terminus: UPF0291 protein SGO_0570 (85 aa).

The tract at residues 56-85 is disordered; the sequence is EDGNDVTPEKLRQVQREKGLHGRSLDDPNS. A compositionally biased stretch (basic and acidic residues) spans 62 to 85; that stretch reads TPEKLRQVQREKGLHGRSLDDPNS.

The protein belongs to the UPF0291 family.

The protein resides in the cytoplasm. The chain is UPF0291 protein SGO_0570 from Streptococcus gordonii (strain Challis / ATCC 35105 / BCRC 15272 / CH1 / DL1 / V288).